We begin with the raw amino-acid sequence, 613 residues long: Nuclear receptor subfamily 1 group D member 1 (613 aa).

The segment covering 1–48 (MTTLDSNNNTGGVITYIGSSGSSPNRTSPESLYSDSSNGSFQSLTQGC) has biased composition (polar residues). The required for phosphorylation by CSNK1E and cytoplasmic localization stretch occupies residues 1 to 70 (MTTLDSNNNT…TQDPARSFGS (70 aa)). The interval 1–102 (MTTLDSNNNT…SSFYNGSPPG (102 aa)) is disordered. The modulating stretch occupies residues 1 to 129 (MTTLDSNNNT…TSNITKLNGM (129 aa)). Residues 49-285 (PTYFPPSPTG…PPRSPSPEPT (237 aa)) form a crucial for activation of GJA1 region. A phosphoserine; by GSK3-beta mark is found at S55 and S59. Low complexity predominate over residues 69–102 (GSIPPSLGDDGSPSSSSSSSSSSSSSFYNGSPPG). Positions 130–206 (VLLCKVCGDV…VGMSRDAVRF (77 aa)) form a DNA-binding region, nuclear receptor. NR C4-type zinc fingers lie at residues 133–153 (CKVCGDVASGFHYGVHACEGC) and 170–194 (CLKNENCSIVRINRNRCQQCRFKKC). N6-acetyllysine; by KAT5 occurs at positions 192 and 193. The disordered stretch occupies residues 233–286 (SSQCPLETPPTQHPTPGPMGPSPPPAPAPSPLVGFSQFPQQLTPPRSPSPEPTV). The span at 239-262 (ETPPTQHPTPGPMGPSPPPAPAPS) shows a compositional bias: pro residues. T275 bears the Phosphothreonine; by CDK1 mark. Residues 285–613 (TVEDVISQVA…KLLSFRVDAQ (329 aa)) form the NR LBD domain. Residue C417 participates in heme binding. N6-acetyllysine is present on K590. Heme is bound at residue H601.

It belongs to the nuclear hormone receptor family. NR1 subfamily. In terms of assembly, binds DNA as a monomer or a homodimer. Interacts with C1D, SP1 and ZNHIT1. Interacts with OPHN1 (via C-terminus). Interacts with PER2; the interaction associates PER2 to BMAL1 promoter region. Interacts with CRY1. Interacts with CCAR2. Interacts with NR2E3. Interacts with SIAH2. Interacts with FBXW7 and CDK1. Interacts with HUWE1. Interacts with NR0B2. Interacts with NFIL3. Interacts (via domain NR LBD) with HSP90AA1 and HSP90AB1. Post-translationally, ubiquitinated, leading to its proteasomal degradation. Ubiquitinated by the SCF(FBXW7) complex when phosphorylated by CDK1 leading to its proteasomal degradation. Ubiquitinated by SIAH2; leading to its proteasomal degradation. Rapidly ubiquitinated in response to inflammatory triggers and sumoylation is a prerequisite to its ubiquitination. Sumoylated by UBE2I, desumoylated by SENP1, and sumoylation is a prerequisite to its ubiquitination. In terms of processing, phosphorylated by CSNK1E; phosphorylation enhances its cytoplasmic localization. Post-translationally, undergoes lysosome-mediated degradation in a time-dependent manner in the liver. Expressed in all tissues and cell lines examined. Expressed at high levels in some squamous carcinoma cell lines.

It localises to the nucleus. It is found in the cytoplasm. Its subcellular location is the cell projection. The protein resides in the dendrite. The protein localises to the dendritic spine. In terms of biological role, transcriptional repressor which coordinates circadian rhythm and metabolic pathways in a heme-dependent manner. Integral component of the complex transcription machinery that governs circadian rhythmicity and forms a critical negative limb of the circadian clock by directly repressing the expression of core clock components BMAL1, CLOCK and CRY1. Also regulates genes involved in metabolic functions, including lipid and bile acid metabolism, adipogenesis, gluconeogenesis and the macrophage inflammatory response. Acts as a receptor for heme which stimulates its interaction with the NCOR1/HDAC3 corepressor complex, enhancing transcriptional repression. Recognizes two classes of DNA response elements within the promoter of its target genes and can bind to DNA as either monomers or homodimers, depending on the nature of the response element. Binds as a monomer to a response element composed of the consensus half-site motif 5'-[A/G]GGTCA-3' preceded by an A/T-rich 5' sequence (RevRE), or as a homodimer to a direct repeat of the core motif spaced by two nucleotides (RevDR-2). Acts as a potent competitive repressor of ROR alpha (RORA) function and regulates the levels of its ligand heme by repressing the expression of PPARGC1A, a potent inducer of heme synthesis. Regulates lipid metabolism by repressing the expression of APOC3 and by influencing the activity of sterol response element binding proteins (SREBPs); represses INSIG2 which interferes with the proteolytic activation of SREBPs which in turn govern the rhythmic expression of enzymes with key functions in sterol and fatty acid synthesis. Regulates gluconeogenesis via repression of G6PC1 and PEPCK and adipocyte differentiation via repression of PPARG. Regulates glucagon release in pancreatic alpha-cells via the AMPK-NAMPT-SIRT1 pathway and the proliferation, glucose-induced insulin secretion and expression of key lipogenic genes in pancreatic-beta cells. Positively regulates bile acid synthesis by increasing hepatic expression of CYP7A1 via repression of NR0B2 and NFIL3 which are negative regulators of CYP7A1. Modulates skeletal muscle oxidative capacity by regulating mitochondrial biogenesis and autophagy; controls mitochondrial biogenesis and respiration by interfering with the STK11-PRKAA1/2-SIRT1-PPARGC1A signaling pathway. Represses the expression of SERPINE1/PAI1, an important modulator of cardiovascular disease and the expression of inflammatory cytokines and chemokines in macrophages. Represses gene expression at a distance in macrophages by inhibiting the transcription of enhancer-derived RNAs (eRNAs). Plays a role in the circadian regulation of body temperature and negatively regulates thermogenic transcriptional programs in brown adipose tissue (BAT); imposes a circadian oscillation in BAT activity, increasing body temperature when awake and depressing thermogenesis during sleep. In concert with NR2E3, regulates transcriptional networks critical for photoreceptor development and function. In addition to its activity as a repressor, can also act as a transcriptional activator. In the ovarian granulosa cells acts as a transcriptional activator of STAR which plays a role in steroid biosynthesis. In collaboration with SP1, activates GJA1 transcription in a heme-independent manner. Represses the transcription of CYP2B10, CYP4A10 and CYP4A14. Represses the transcription of CES2. Represses and regulates the circadian expression of TSHB in a NCOR1-dependent manner. Negatively regulates the protein stability of NR3C1 and influences the time-dependent subcellular distribution of NR3C1, thereby affecting its transcriptional regulatory activity. Plays a critical role in the circadian control of neutrophilic inflammation in the lung; under resting, non-stress conditions, acts as a rhythmic repressor to limit inflammatory activity whereas in the presence of inflammatory triggers undergoes ubiquitin-mediated degradation thereby relieving inhibition of the inflammatory response. Plays a key role in the circadian regulation of microglial activation and neuroinflammation; suppresses microglial activation through the NF-kappaB pathway in the central nervous system. Plays a role in the regulation of the diurnal rhythms of lipid and protein metabolism in the skeletal muscle via transcriptional repression of genes controlling lipid and amino acid metabolism in the muscle. This is Nuclear receptor subfamily 1 group D member 1 (NR1D1) from Bos taurus (Bovine).